The chain runs to 114 residues: uncharacterized protein (114 aa).

This is an uncharacterized protein from Human cytomegalovirus (strain AD169) (HHV-5).